Here is a 297-residue protein sequence, read N- to C-terminus: ER membrane protein complex subunit 2-A (297 aa).

3 TPR repeats span residues 87–120, 155–188, and 192–225; these read HRVKRLTGLRFEAMERYDDALQIYDRILQDDPTN, QEAWHELAELYINELDYAKAAFCLEELILTNPHN, and YQQFAEVKYTQGGLENLELSRKYFSQALKLNNHN.

It belongs to the EMC2 family. As to quaternary structure, component of the ER membrane protein complex (EMC).

The protein localises to the endoplasmic reticulum membrane. Its function is as follows. Part of the endoplasmic reticulum membrane protein complex (EMC) that enables the energy-independent insertion into endoplasmic reticulum membranes of newly synthesized membrane proteins. Preferentially accommodates proteins with transmembrane domains that are weakly hydrophobic or contain destabilizing features such as charged and aromatic residues. Involved in the cotranslational insertion of multi-pass membrane proteins in which stop-transfer membrane-anchor sequences become ER membrane spanning helices. It is also required for the post-translational insertion of tail-anchored/TA proteins in endoplasmic reticulum membranes. By mediating the proper cotranslational insertion of N-terminal transmembrane domains in an N-exo topology, with translocated N-terminus in the lumen of the ER, controls the topology of multi-pass membrane proteins. By regulating the insertion of various proteins in membranes, it is indirectly involved in many cellular processes. The polypeptide is ER membrane protein complex subunit 2-A (emc2-a) (Xenopus laevis (African clawed frog)).